A 261-amino-acid chain; its full sequence is tRNA pseudouridine synthase A (261 aa).

Catalysis depends on D51, which acts as the Nucleophile. Y109 contributes to the substrate binding site.

It belongs to the tRNA pseudouridine synthase TruA family. Homodimer.

The catalysed reaction is uridine(38/39/40) in tRNA = pseudouridine(38/39/40) in tRNA. Formation of pseudouridine at positions 38, 39 and 40 in the anticodon stem and loop of transfer RNAs. The sequence is that of tRNA pseudouridine synthase A from Methylobacillus flagellatus (strain ATCC 51484 / DSM 6875 / VKM B-1610 / KT).